The chain runs to 1255 residues: Structural polyprotein (1255 aa).

The segment at 1 to 33 (MFPFQPMYPMQPMPYRNPFAAPRRPWFPRTDPF) is necessary for nucleocapsid assembly and virus assembly. Positions 33-68 (FLAMQVQELTRSMANLTFKQRRDAPPEGPPAKKPKR) are host transcription inhibition. Positions 41–48 (LTRSMANL) match the Supraphysiological nuclear export signal motif. The disordered stretch occupies residues 44-119 (SMANLTFKQR…KKPGKRQRMV (76 aa)). A Nuclear localization signal motif is present at residues 64-68 (KKPKR). Positions 80–92 (GKKKKNQGKKKAK) are enriched in basic residues. The interval 91 to 127 (AKTGPPNPKAQSGNKKKPNKKPGKRQRMVMKLESDKT) is binding to the viral RNA. At Thr-93 the chain carries Phosphothreonine. Over residues 104–118 (NKKKPNKKPGKRQRM) the composition is skewed to basic residues. Residues 112–126 (PGKRQRMVMKLESDK) are ribosome-binding. Position 124 is a phosphoserine (Ser-124). Residues 126-275 (KTFPIMLEGK…KYTPENCEQW (150 aa)) form the Peptidase S3 domain. Residue Thr-127 is modified to Phosphothreonine. Catalysis depends on His-152, which acts as the Charge relay system. The tract at residues 168–173 (KKASKY) is interaction with spike glycoprotein E2. Catalysis depends on charge relay system residues Asp-174 and Ser-226. An interaction with spike glycoprotein E2 region spans residues 260–264 (EKGVT). The functions as an uncleaved signal peptide for the precursor of protein E3/E2 stretch occupies residues 276–287 (SLVTTMCLLANV). The Extracellular segment spans residues 276–701 (SLVTTMCLLA…HYYHRYPMST (426 aa)). 7 cysteine pairs are disulfide-bonded: Cys-282–Cys-291, Cys-353–Cys-457, Cys-356–Cys-361, Cys-424–Cys-438, Cys-485–Cys-600, Cys-534–Cys-560, and Cys-536–Cys-554. Asn-286 carries N-linked (GlcNAc...) asparagine; by host glycosylation. A glycan (N-linked (GlcNAc...) asparagine; by host) is linked at Asn-652. The helical transmembrane segment at 702-722 (ILGLSICAAIVTVSVAASTWL) threads the bilayer. At 723–757 (FCKSRVSCLTPYRLTPNARMPLCLAVLCCARTARA) the chain is on the cytoplasmic side. An interaction with the capsid protein region spans residues 725–729 (KSRVS). Residues Cys-730, Cys-750, and Cys-751 are each lipidated (S-palmitoyl cysteine; by host). Positions 730–750 (CLTPYRLTPNARMPLCLAVLC) are transient transmembrane before p62-6K protein processing. Residues Cys-730 and Cys-751 are joined by a disulfide bond. Over 758–769 (ETTWESLDHLWN) the chain is Extracellular. Residues 770–790 (NNQQMFWIQLLIPLAALIVVT) form a helical membrane-spanning segment. Arg-791 is a topological domain (cytoplasmic). A helical membrane pass occupies residues 792 to 812 (LLKCVCCVVPFLVVAGAAGAG). Residues 813 to 1225 (AYEHATTMPS…SKTAWTWLTS (413 aa)) are Extracellular-facing. Cystine bridges form between Cys-862–Cys-927, Cys-875–Cys-907, Cys-876–Cys-909, and Cys-881–Cys-891. The segment at 897–914 (VYPFMWGGAYCFCDTENT) is E1 fusion peptide loop. 2 N-linked (GlcNAc...) asparagine; by host glycosylation sites follow: Asn-947 and Asn-1083. 4 disulfide bridges follow: Cys-1072/Cys-1084, Cys-1114/Cys-1189, Cys-1119/Cys-1193, and Cys-1141/Cys-1183. The helical transmembrane segment at 1226 to 1246 (LLGGSAVIIIIGLVLATIVAM) threads the bilayer. Topologically, residues 1247–1255 (YVLTNQKHN) are cytoplasmic.

As to quaternary structure, homodimer. Homomultimer. Interacts with host karyopherin KPNA4; this interaction allows the nuclear import of the viral capsid protein. Interacts with spike glycoprotein E2. Interacts with host IRAK1; the interaction leads to inhibition of IRAK1-dependent signaling. Part of a tetrameric complex composed of host CRM1, host importin alpha/beta dimer and the viral capsid; this complex blocks the receptor-mediated transport through the nuclear pore. Interacts with host phosphatase PPP1CA; this interaction dephosphorylates the capsid protein, which increases its ability to bind to the viral genome. The precursor of protein E3/E2 and E1 form a heterodimer shortly after synthesis. In terms of assembly, interacts with spike glycoprotein E2. The precursor of protein E3/E2 and E1 form a heterodimer shortly after synthesis. Processing of the precursor of protein E3/E2 into E2 and E3 results in a heterodimer of the spike glycoproteins E2 and E1. Spike at virion surface are constituted of three E2-E1 heterodimers. After target cell attachment and endocytosis, E1 change conformation to form homotrimers. Interacts with 6K protein. Interacts with host LDLRAD3; this interaction mediates viral entry to the host cell. As to quaternary structure, interacts with spike glycoprotein E1. Processing of the precursor of protein E3/E2 into E2 and E3 results in a heterodimer of the spike glycoproteins E2 and E1. Spike at virion surface are constituted of a trimer of E2-E1 heterodimers. Interacts with 6K protein. Interacts with host LDLRAD3; this interaction mediates viral entry to the host cell. Oligomer. Interacts with spike glycoprotein E1. Interacts with spike glycoprotein E2. In terms of processing, structural polyprotein: Specific enzymatic cleavages in vivo yield mature proteins. Capsid protein is auto-cleaved during polyprotein translation, unmasking a signal peptide at the N-terminus of the precursor of E3/E2. The remaining polyprotein is then targeted to the host endoplasmic reticulum, where host signal peptidase cleaves it into pE2, 6K and E1 proteins. pE2 is further processed to mature E3 and E2 by host furin in trans-Golgi vesicle. Post-translationally, phosphorylated on serine and threonine residues. Palmitoylated via thioester bonds. These palmitoylations may induce disruption of the C-terminus transmembrane. This would result in the reorientation of E2 C-terminus from lumenal to cytoplasmic side. In terms of processing, N-glycosylated. Post-translationally, palmitoylated via thioester bonds.

It is found in the virion. Its subcellular location is the host cytoplasm. The protein resides in the host cell membrane. It localises to the host nucleus. The protein localises to the virion membrane. It is found in the host Golgi apparatus. Its subcellular location is the host trans-Golgi network. The protein resides in the host endoplasmic reticulum. The enzyme catalyses Autocatalytic release of the core protein from the N-terminus of the togavirus structural polyprotein by hydrolysis of a -Trp-|-Ser- bond.. Functionally, forms an icosahedral capsid with a T=4 symmetry composed of 240 copies of the capsid protein surrounded by a lipid membrane through which penetrate 80 spikes composed of trimers of E1-E2 heterodimers. The capsid protein binds to the viral RNA genome at a site adjacent to a ribosome binding site for viral genome translation following genome release. Possesses a protease activity that results in its autocatalytic cleavage from the nascent structural protein. Following its self-cleavage, the capsid protein transiently associates with ribosomes, and within several minutes the protein binds to viral RNA and rapidly assembles into icosahedric core particles. The resulting nucleocapsid eventually associates with the cytoplasmic domain of the spike glycoprotein E2 at the cell membrane, leading to budding and formation of mature virions. In case of infection, new virions attach to target cells and after clathrin-mediated endocytosis their membrane fuses with the host endosomal membrane. This leads to the release of the nucleocapsid into the cytoplasm, followed by an uncoating event necessary for the genomic RNA to become accessible. The uncoating might be triggered by the interaction of capsid proteins with ribosomes. Binding of ribosomes would release the genomic RNA since the same region is genomic RNA-binding and ribosome-binding. Specifically inhibits interleukin-1 receptor-associated kinase 1/IRAK1-dependent signaling during viral entry, representing a means by which the alphaviruses may evade innate immune detection and activation prior to viral gene expression. Inhibits host transcription. Forms a tetrameric complex with XPO1/CRM1 and the nuclear import receptor importin. This complex blocks the central channel of host nuclear pores thereby inhibiting the receptor-mediated nuclear transport and thus the host mRNA and rRNA transcription. The inhibition of transcription is linked to a cytopathic effect on the host cell. In terms of biological role, provides the signal sequence for the translocation of the precursor of protein E3/E2 to the host endoplasmic reticulum. Furin-cleaved E3 remains associated with spike glycoprotein E1 and mediates pH protection of the latter during the transport via the secretory pathway. After virion release from the host cell, the assembly protein E3 is gradually released in the extracellular space. Its function is as follows. Plays a role in viral attachment to target host cell, by binding to the cell receptor LDLRAD3. Synthesized as a p62 precursor which is processed by furin at the cell membrane just before virion budding, giving rise to E2-E1 heterodimer. The p62-E1 heterodimer is stable, whereas E2-E1 is unstable and dissociate at low pH. p62 is processed at the last step, presumably to avoid E1 fusion activation before its final export to cell surface. E2 C-terminus contains a transitory transmembrane that would be disrupted by palmitoylation, resulting in reorientation of the C-terminal tail from lumenal to cytoplasmic side. This step is critical since E2 C-terminus is involved in budding by interacting with capsid proteins. This release of E2 C-terminus in cytoplasm occurs lately in protein export, and precludes premature assembly of particles at the endoplasmic reticulum membrane. Acts as a viroporin that participates in virus glycoprotein processing and transport to the plasma membrane, cell permeabilization and budding of viral particles. Disrupts the calcium homeostasis of the cell, probably at the endoplasmic reticulum level. This leads to cytoplasmic calcium elevation. Because of its lipophilic properties, the 6K protein is postulated to influence the selection of lipids that interact with the transmembrane domains of the glycoproteins, which, in turn, affects the deformability of the bilayer required for the extreme curvature that occurs as budding proceeds. Present in low amount in virions, about 3% compared to viral glycoproteins. Functionally, class II viral fusion protein. Fusion activity is inactive as long as E1 is bound to E2 in mature virion. After virus attachment to cell receptor LDLRAD3 and endocytosis, acidification of the endosome induce dissociation of E1/E2 heterodimer and concomitant trimerization of the E1 subunits. This E1 trimer is fusion active, and promotes release of viral nucleocapsid in cytoplasm after endosome and viral membrane fusion. Efficient fusion requires the presence of cholesterol and sphingolipid in the target membrane. The polypeptide is Structural polyprotein (Venezuelan equine encephalitis virus (strain P676) (VEEV)).